The sequence spans 404 residues: Zinc finger protein zfs1 (404 aa).

A compositionally biased stretch (polar residues) spans 134–149; sequence SYLHSGSSPHGNTSNH. Disordered stretches follow at residues 134–168 and 259–322; these read SYLH…TGSG and SNAS…APNG. Residues 150-168 show a composition bias toward low complexity; that stretch reads PSPISSLESLPSRSSTGSG. Residues 259-283 show a composition bias toward polar residues; it reads SNASIRNAPSNLSKQFSPSGNSPLT. Positions 304-317 are enriched in low complexity; sequence GSASHPHGSGSSNG. C3H1-type zinc fingers lie at residues 326 to 354 and 364 to 392; these read LYKT…HGNQ and KYKS…HDES.

In terms of assembly, interacts with moc3.

It localises to the cytoplasm. It is found in the nucleus. Functionally, binds to specific AU-rich elements (ARE) in the 3'-untranslated region of target mRNAs and promotes their degradation. Binds to ARE present in the arz1 mRNA and stimulates the rate of arz1 mRNA decay. Required for coordination of septum formation with exit from mitosis. Involved in the mating response pathway. Induces sexual development and ascus formation. This chain is Zinc finger protein zfs1 (zfs1), found in Schizosaccharomyces pombe (strain 972 / ATCC 24843) (Fission yeast).